The primary structure comprises 232 residues: Multiple organellar RNA editing factor 6, mitochondrial (232 aa).

Residues 1 to 67 (MAKTLSRSTA…TIRTRMDRSG (67 aa)) constitute a mitochondrion transit peptide. The tract at residues 208-232 (TNQRGSDKPKYHDRIRNVRRRENMR) is disordered. Residues 212 to 232 (GSDKPKYHDRIRNVRRRENMR) show a composition bias toward basic and acidic residues.

Belongs to the MORF family. Heterodimers with MORF8/RIP1, MORF3/RIP3, MORF6/RIP6, MORF7/RIP7 and MORF9/RIP9.

The protein localises to the mitochondrion. Involved in organellar RNA editing. Required for the processing of few RNA editing sites in mitochondria. The polypeptide is Multiple organellar RNA editing factor 6, mitochondrial (Arabidopsis thaliana (Mouse-ear cress)).